Consider the following 744-residue polypeptide: FHF complex subunit HOOK-interacting protein 2B (744 aa).

Disordered regions lie at residues 184–213 and 510–530; these read KTAR…LNRD and LDSG…SSDG. Residues 197-213 are compositionally biased toward basic and acidic residues; the sequence is AGYRDKDCPHSDALNRD.

The protein belongs to the FHIP family. Expressed in colon.

In terms of biological role, able to activate MAPK/ERK and TGFB signaling pathways. May regulate the activity of genes involved in intestinal barrier function and immunoprotective inflammation. May play a role in cell proliferation. The polypeptide is FHF complex subunit HOOK-interacting protein 2B (Mus musculus (Mouse)).